Reading from the N-terminus, the 230-residue chain is Uracil-DNA glycosylase (230 aa).

Asp70 acts as the Proton acceptor in catalysis.

The protein belongs to the uracil-DNA glycosylase (UDG) superfamily. UNG family.

Its subcellular location is the cytoplasm. It catalyses the reaction Hydrolyzes single-stranded DNA or mismatched double-stranded DNA and polynucleotides, releasing free uracil.. Its function is as follows. Excises uracil residues from the DNA which can arise as a result of misincorporation of dUMP residues by DNA polymerase or due to deamination of cytosine. This is Uracil-DNA glycosylase from Campylobacter concisus (strain 13826).